The following is a 598-amino-acid chain: MFGIQENIPRGGTTMKEEPLGGGMNPVRSWMHTAGVVDANTAAQSGVGLARAHFEKQPPSNLRKSNFFHFVLAMYDRQGQPVEIERTTFVDFVEKDKEPNSEKTNNGIHYKLQLLYSNGVRTEQDLYVRLIDSMTKQAIIYEGQDKNPEMCRVLLTHEIMCSRCCDKKSCGNRNETPSDPVIIDRFFLKFFLKCNQNCLKNAGNPRDMRRFQVVVSTTVNVDGHVLAVSDNMFVHNNSKHGRRARRLDPSEGTAPSYLENVATPCIKAISPSEGWTTGGATVIIIGDNFFDGLQVVFGTMLVWSELITPHAIRVQTPPRHIPGVVEVTLSYKSKQFCKGAPGRFVYTALNEPTIDYGFQRLQKVIPRHPGDPERLPKEVLLKRAADLVEALYGMPHNNQEIILKRAADIAEALYSVPRNHNQIPSLANTPSHSGMMGVNSFSSQLAVNVSETSQANDQVGYSRNTSSVSPRGYVPSSTPQQSNYNTVSNSMNGYGNAGMPNLGVPGSPGFLNGSSANSPYGIVPSSPTMAASSVTLPSNCSSTHGIFSFSPANVISAVKQKSAFAPVVRPQASPPPSCTSANGNGLQDMYFSPTFSKS.

The tract at residues 1–23 (MFGIQENIPRGGTTMKEEPLGGG) is disordered. The interval 63-66 (RKSN) is interaction with DNA. The C5-type zinc-finger motif lies at 151–170 (CRVLLTHEIMCSRCCDKKSC). Interaction with DNA stretches follow at residues 197-204 (NCLKNAGN) and 236-239 (NNSK). An IPT/TIG domain is found at 264–347 (PCIKAISPSE…KGAPGRFVYT (84 aa)). Residues 452-483 (TSQANDQVGYSRNTSSVSPRGYVPSSTPQQSN) form a disordered region.

Belongs to the COE family. Forms either a homodimer or a heterodimer with a related family member.

The protein localises to the nucleus. Acts as a transcriptional activator. The chain is Transcription factor COE3 (coe3) from Xenopus laevis (African clawed frog).